Here is a 129-residue protein sequence, read N- to C-terminus: Small ribosomal subunit protein uS11 (129 aa).

This sequence belongs to the universal ribosomal protein uS11 family. In terms of assembly, part of the 30S ribosomal subunit. Interacts with proteins S7 and S18. Binds to IF-3.

Functionally, located on the platform of the 30S subunit, it bridges several disparate RNA helices of the 16S rRNA. Forms part of the Shine-Dalgarno cleft in the 70S ribosome. The polypeptide is Small ribosomal subunit protein uS11 (Novosphingobium aromaticivorans (strain ATCC 700278 / DSM 12444 / CCUG 56034 / CIP 105152 / NBRC 16084 / F199)).